A 159-amino-acid chain; its full sequence is Cyclic pyranopterin monophosphate synthase (159 aa).

Substrate-binding positions include 76-78 (LCH) and 114-115 (ME). Residue Asp129 is part of the active site.

It belongs to the MoaC family. As to quaternary structure, homohexamer; trimer of dimers.

The enzyme catalyses (8S)-3',8-cyclo-7,8-dihydroguanosine 5'-triphosphate = cyclic pyranopterin phosphate + diphosphate. Its pathway is cofactor biosynthesis; molybdopterin biosynthesis. In terms of biological role, catalyzes the conversion of (8S)-3',8-cyclo-7,8-dihydroguanosine 5'-triphosphate to cyclic pyranopterin monophosphate (cPMP). The sequence is that of Cyclic pyranopterin monophosphate synthase from Shewanella oneidensis (strain ATCC 700550 / JCM 31522 / CIP 106686 / LMG 19005 / NCIMB 14063 / MR-1).